The following is a 309-amino-acid chain: Pantothenate kinase (309 aa).

92-99 lines the ATP pocket; that stretch reads GSVAVGKT.

This sequence belongs to the prokaryotic pantothenate kinase family.

It localises to the cytoplasm. The catalysed reaction is (R)-pantothenate + ATP = (R)-4'-phosphopantothenate + ADP + H(+). It participates in cofactor biosynthesis; coenzyme A biosynthesis; CoA from (R)-pantothenate: step 1/5. This is Pantothenate kinase (coaA) from Lactiplantibacillus plantarum (strain ATCC BAA-793 / NCIMB 8826 / WCFS1) (Lactobacillus plantarum).